We begin with the raw amino-acid sequence, 146 residues long: Ribosome maturation factor RimP (146 aa).

The protein belongs to the RimP family.

Its subcellular location is the cytoplasm. In terms of biological role, required for maturation of 30S ribosomal subunits. This is Ribosome maturation factor RimP from Helicobacter pylori (strain P12).